The chain runs to 86 residues: Small ribosomal subunit protein uS15 (86 aa).

This sequence belongs to the universal ribosomal protein uS15 family. Part of the 30S ribosomal subunit. Forms a bridge to the 50S subunit in the 70S ribosome, contacting the 23S rRNA.

In terms of biological role, one of the primary rRNA binding proteins, it binds directly to 16S rRNA where it helps nucleate assembly of the platform of the 30S subunit by binding and bridging several RNA helices of the 16S rRNA. Its function is as follows. Forms an intersubunit bridge (bridge B4) with the 23S rRNA of the 50S subunit in the ribosome. This is Small ribosomal subunit protein uS15 from Neorickettsia sennetsu (strain ATCC VR-367 / Miyayama) (Ehrlichia sennetsu).